Reading from the N-terminus, the 656-residue chain is Solute carrier family 5 member 4A (656 aa).

The Cytoplasmic segment spans residues 1–28 (MASTASVSTSTASSELSSLSNNINNAAD). The helical transmembrane segment at 29–47 (ISVIVIYFVVVMAVGVWAM) threads the bilayer. The Extracellular segment spans residues 48–64 (LKTNRSTVGGFFLAGRS). Residues 65-85 (MTWWPMGASLFASNIGSGHFV) form a helical membrane-spanning segment. The Cytoplasmic portion of the chain corresponds to 86–105 (GLAGTGAASGIAVTAFESHS). The helical transmembrane segment at 106–126 (FALLLVLGWIFVPIYIKAGVM) threads the bilayer. The Extracellular portion of the chain corresponds to 127 to 171 (TMPEYLKKRFGGKRLQIYLSILFLFICVILTISADIFSGAIFIKL). The chain crosses the membrane as a helical span at residues 172-191 (ALGLNLYLAILILLAITAIF). The Cytoplasmic portion of the chain corresponds to 192–208 (TITGGLASVIYTDTVQA). A helical membrane pass occupies residues 209-229 (VIMLVGSFILMVFAFVEVGGY). The Extracellular portion of the chain corresponds to 230-270 (ESFTEKFMNAIPSVVEGDNLTINSRCYTPQPDSFHIFRDPV). An N-linked (GlcNAc...) asparagine glycan is attached at Asn-248. A helical membrane pass occupies residues 271–291 (TGDIPWPGTAFGMPITALWYW). At 292 to 314 (CINQVIVQRCLCGKNLSHVKAAC) the chain is on the cytoplasmic side. Residues 315–334 (ILCGYLKLLPLFFMVMPGMI) traverse the membrane as a helical segment. At 335–423 (SRILYTDMVA…RKKASERELL (89 aa)) the chain is on the extracellular side. A helical membrane pass occupies residues 424 to 443 (IAGRLFVSVLIVTSILWVPI). The Cytoplasmic segment spans residues 444–455 (VEVSQGGQLVHY). Residues 456-476 (TEAISSYLGPPIAAVFLVAVF) traverse the membrane as a helical segment. Topologically, residues 477-526 (CKRANEQGAFWGLMVGLVMGLIRMIAEFSYGTGSCLAPSSCPKIICGVHY) are extracellular. Residues 527 to 547 (LYFAIILFFVCILVILGVSYL) traverse the membrane as a helical segment. The Cytoplasmic segment spans residues 548–634 (TKPIPDVHLH…TDTTEKPFWR (87 aa)). The interval 574–593 (DAEDKEENGADDRTEEDQTE) is disordered. Residues 635–655 (TVMNVNVILLLAVAAFFYGYF) form a helical membrane-spanning segment.

It belongs to the sodium:solute symporter (SSF) (TC 2.A.21) family. In terms of tissue distribution, expressed in small intestine. Expressed in kidney.

It is found in the cell membrane. With respect to regulation, not inhibited by phlorizin. Functionally, does not function as sodium/D-glucose symporter. Generates D-glucose-induced depolarization in a pH-dependent manner, with activity in acidic conditions (pH 5) but not neutral conditions. The chain is Solute carrier family 5 member 4A from Mus musculus (Mouse).